Consider the following 107-residue polypeptide: Iron-binding protein IscA (107 aa).

3 residues coordinate Fe cation: cysteine 35, cysteine 99, and cysteine 101.

It belongs to the HesB/IscA family. Homodimer; may form tetramers and higher multimers. Fe cation serves as cofactor.

Functionally, is able to transfer iron-sulfur clusters to apo-ferredoxin. Multiple cycles of [2Fe2S] cluster formation and transfer are observed, suggesting that IscA acts catalytically. Recruits intracellular free iron so as to provide iron for the assembly of transient iron-sulfur cluster in IscU in the presence of IscS, L-cysteine and the thioredoxin reductase system TrxA/TrxB. The sequence is that of Iron-binding protein IscA from Klebsiella pneumoniae (strain 342).